The following is a 130-amino-acid chain: Transcription antitermination protein NusB (130 aa).

The protein belongs to the NusB family.

Functionally, involved in transcription antitermination. Required for transcription of ribosomal RNA (rRNA) genes. Binds specifically to the boxA antiterminator sequence of the ribosomal RNA (rrn) operons. The polypeptide is Transcription antitermination protein NusB (Bacillus cereus (strain ATCC 10987 / NRS 248)).